A 623-amino-acid polypeptide reads, in one-letter code: EIN3-binding F-box protein 2 (623 aa).

Positions Gln52–Val106 constitute an F-box domain. LRR repeat units follow at residues Gly119–Gly147, Glu151–Asn176, Leu177–Arg202, Cys203–Ser228, Cys229–Ser254, Cys255–Met281, Leu307–Ser334, Cys335–Lys360, Cys361–Glu386, Cys387–Asn413, Cys414–Cys441, Cys442–Gly467, Leu468–Glu494, Cys495–Gly521, Cys522–Asn547, Thr548–Gly574, Cys575–Arg600, and Cys601–Tyr623.

As to quaternary structure, part of a SCF (SKP1-cullin-F-box) protein ligase complex. Interacts with CUL1, SKP1A/ASK1, SKP1B/ASK2, EIN3, and EIL1. In terms of tissue distribution, ubiquitous.

The protein resides in the nucleus. It functions in the pathway protein modification; protein ubiquitination. Functionally, component of SCF(EBF1) E3 ubiquitin ligase complexes, which may mediate the ubiquitination and subsequent proteasomal degradation of target proteins (probably including EIN3 and EIL1). Regulator of the ethylene signaling cascade by modulating the stability of EIN3 and EIL1 proteins. This is EIN3-binding F-box protein 2 (EBF2) from Arabidopsis thaliana (Mouse-ear cress).